A 336-amino-acid polypeptide reads, in one-letter code: Dihydroorotate dehydrogenase (quinone) (336 aa).

FMN contacts are provided by residues alanine 62 to lysine 66 and threonine 86. Lysine 66 contacts substrate. Asparagine 111–phenylalanine 115 is a substrate binding site. Positions 139 and 172 each coordinate FMN. Asparagine 172 is a substrate binding site. Serine 175 serves as the catalytic Nucleophile. Asparagine 177 lines the substrate pocket. Residues lysine 217 and threonine 245 each coordinate FMN. A substrate-binding site is contributed by asparagine 246–threonine 247. Residues glycine 268, glycine 297, and tyrosine 318 to serine 319 each bind FMN.

The protein belongs to the dihydroorotate dehydrogenase family. Type 2 subfamily. In terms of assembly, monomer. Requires FMN as cofactor.

It is found in the cell membrane. It catalyses the reaction (S)-dihydroorotate + a quinone = orotate + a quinol. The protein operates within pyrimidine metabolism; UMP biosynthesis via de novo pathway; orotate from (S)-dihydroorotate (quinone route): step 1/1. In terms of biological role, catalyzes the conversion of dihydroorotate to orotate with quinone as electron acceptor. The polypeptide is Dihydroorotate dehydrogenase (quinone) (Salmonella choleraesuis (strain SC-B67)).